The primary structure comprises 135 residues: MADHNDRGRQGEEIALKHLRQQGYQIEALNWQSGRRELDIVASTSRELVVVEVKTRTEGFLLAPEEAVDARKRRLISESAHHYVRMYAIDLPVRFDVISVVLSADGSCKRIEHRENAFPLLLKRSQRSTPRRRRL.

The protein belongs to the UPF0102 family.

This is UPF0102 protein PGN_1801 from Porphyromonas gingivalis (strain ATCC 33277 / DSM 20709 / CIP 103683 / JCM 12257 / NCTC 11834 / 2561).